A 182-amino-acid chain; its full sequence is UPF0397 protein SPT_0523 (182 aa).

Transmembrane regions (helical) follow at residues 10–30, 46–66, 73–93, 109–129, and 148–168; these read VVAVGIGAALFVVIGMINIPT, LLSIIFGPIIGLLVGLIGHAI, YGLWWTWIIASGLFGLVVGLF, ILIFNLIQLLANALVWGVLAP, and IVAGIANGVSVAIAGTLLLLA.

The protein belongs to the UPF0397 family.

It localises to the cell membrane. In Streptococcus pneumoniae (strain Taiwan19F-14), this protein is UPF0397 protein SPT_0523.